Here is a 682-residue protein sequence, read N- to C-terminus: MKPSWLQCRKVTGAGTLGAPLPGSPSVRGAAVTRRALVAGFGGRGCRALTTGSGGEYKTHFAASVADPERFWGKAAEQISWYKPWTKTLESRYPPSTSWFVEGMLNICYNAIDRHIENGQGDKIAIIYDSPVTDTKATISYKEVLEQVSKLAGVLVKQGVKKGDTVVIYMPMIPQAIYTMLACARIGAIHSLIFGGFASKELSTRIDHAKPKVVVTASFGIEPGRKVEYIPLLEEALRIGQHRPDRVLIYSRPNMEKVPLMSGRDLDWEEEMAKAQSHDCVPVLSEHPLYILYTSGTTGLPKGVVRPTGGYAVMLNWTMSSIYGLKPGEVWWAASDLGWVVGHSYICYGPLLHGNTTVLYEGKPVGTPDAGAYFRVLAEHGVAALFTAPTAIRAIRQQDPGAALGKQYSLTRFKTLFVAGERCDVETLEWSKKVFRVPVLDHWWQTETGSPITASCIGLGNSKTPPPGQAGKCVPGYNVMILDDNMQKLKARSLGNIVVKLPLPPGAFSGLWKNQEAFKHLYFEKFPGYYDTMDAGYMDEEGYLYVMSRVDDVINVAGHRISAGAIEESVLSHGTVADCAVVGKEDPLKGHVPLALCVLKKDVNASEEQVLEEIVKHVRQSIGPVAAFRNAVFVKQLPKTRSGKIPRSTLSALVNGKPYKVTPTIEDPSIFGHIEEVLKQAV.

The N-terminal 29 residues, 1 to 29 (MKPSWLQCRKVTGAGTLGAPLPGSPSVRG), are a transit peptide targeting the mitochondrion. 222-225 (EPGR) serves as a coordination point for CoA. ATP-binding positions include 420–422 (GER) and 441–446 (DHWWQT). N6-succinyllysine is present on Lys-513. Lys-519 is modified (N6-acetyllysine). Residues Asp-534, Arg-549, and Arg-560 each coordinate ATP. A CoA-binding site is contributed by Arg-619.

The protein belongs to the ATP-dependent AMP-binding enzyme family.

It localises to the mitochondrion matrix. The enzyme catalyses acetate + ATP + CoA = acetyl-CoA + AMP + diphosphate. The catalysed reaction is propanoate + ATP + CoA = propanoyl-CoA + AMP + diphosphate. It catalyses the reaction butanoate + ATP + CoA = butanoyl-CoA + AMP + diphosphate. Catalyzes the synthesis of acetyl-CoA from short-chain fatty acids. Propionate is the preferred substrate but can also utilize acetate and butyrate with a much lower affinity. This Mus musculus (Mouse) protein is Acyl-CoA synthetase short-chain family member 3, mitochondrial (Acss3).